The sequence spans 189 residues: Elongation factor P (189 aa).

The protein belongs to the elongation factor P family.

The protein localises to the cytoplasm. The protein operates within protein biosynthesis; polypeptide chain elongation. In terms of biological role, involved in peptide bond synthesis. Stimulates efficient translation and peptide-bond synthesis on native or reconstituted 70S ribosomes in vitro. Probably functions indirectly by altering the affinity of the ribosome for aminoacyl-tRNA, thus increasing their reactivity as acceptors for peptidyl transferase. In Campylobacter lari (strain RM2100 / D67 / ATCC BAA-1060), this protein is Elongation factor P.